The sequence spans 91 residues: MDEVKYPVLTEKSIRLLERNQYTFNVDSQSNKTKIKNWIENFFDVKVIAMNSYRLPEKGGKRVSMIGHPIRCKRVIITLRTGDSIPLFSEQ.

This sequence belongs to the universal ribosomal protein uL23 family. As to quaternary structure, part of the 50S ribosomal subunit.

It localises to the plastid. Its subcellular location is the chloroplast. Its function is as follows. Binds to 23S rRNA. The protein is Large ribosomal subunit protein uL23c (rpl23) of Pinus thunbergii (Japanese black pine).